The following is a 331-amino-acid chain: Ketol-acid reductoisomerase (NADP(+)) (331 aa).

The KARI N-terminal Rossmann domain occupies A2 to T182. Residues Y25–Q28, S51, S53, and D83–Q86 contribute to the NADP(+) site. The active site involves H108. G134 serves as a coordination point for NADP(+). The 146-residue stretch at T183–L328 folds into the KARI C-terminal knotted domain. 4 residues coordinate Mg(2+): D191, E195, E227, and E231. Substrate is bound at residue S252.

Belongs to the ketol-acid reductoisomerase family. Mg(2+) is required as a cofactor.

It catalyses the reaction (2R)-2,3-dihydroxy-3-methylbutanoate + NADP(+) = (2S)-2-acetolactate + NADPH + H(+). The catalysed reaction is (2R,3R)-2,3-dihydroxy-3-methylpentanoate + NADP(+) = (S)-2-ethyl-2-hydroxy-3-oxobutanoate + NADPH + H(+). It participates in amino-acid biosynthesis; L-isoleucine biosynthesis; L-isoleucine from 2-oxobutanoate: step 2/4. The protein operates within amino-acid biosynthesis; L-valine biosynthesis; L-valine from pyruvate: step 2/4. In terms of biological role, involved in the biosynthesis of branched-chain amino acids (BCAA). Catalyzes an alkyl-migration followed by a ketol-acid reduction of (S)-2-acetolactate (S2AL) to yield (R)-2,3-dihydroxy-isovalerate. In the isomerase reaction, S2AL is rearranged via a Mg-dependent methyl migration to produce 3-hydroxy-3-methyl-2-ketobutyrate (HMKB). In the reductase reaction, this 2-ketoacid undergoes a metal-dependent reduction by NADPH to yield (R)-2,3-dihydroxy-isovalerate. This chain is Ketol-acid reductoisomerase (NADP(+)), found in Cyanothece sp. (strain PCC 7425 / ATCC 29141).